We begin with the raw amino-acid sequence, 327 residues long: WRKY transcription factor WRKY76 (327 aa).

The stretch at alanine 56–valine 76 forms a coiled coil. Residues arginine 87–glutamate 135 form a disordered region. A Nuclear localization signal motif is present at residues lysine 106–serine 112. The span at glutamate 114–histidine 126 shows a compositional bias: polar residues. Positions aspartate 160–proline 226 form a DNA-binding region, WRKY.

It belongs to the WRKY group II-a family.

It localises to the nucleus. Transcription repressor. Interacts specifically with the W box (5'-(T)TGAC[CT]-3'), a frequently occurring elicitor-responsive cis-acting element. Regulates, probably indirectly, the activation of defense-related genes during defense response. Modulates plant innate immunity against X.oryzae pv. oryzae (Xoo). In Oryza sativa subsp. japonica (Rice), this protein is WRKY transcription factor WRKY76.